Consider the following 342-residue polypeptide: Probable tyrosine--tRNA ligase, cytoplasmic (342 aa).

Tyrosine 48 provides a ligand contact to L-tyrosine. Positions 53–61 (ITGKPHIGY) match the 'HIGH' region motif. L-tyrosine is bound by residues tyrosine 175, glutamine 179, aspartate 182, and glutamine 197. The short motif at 231–235 (KMSSS) is the 'KMSKS' region element.

The protein belongs to the class-I aminoacyl-tRNA synthetase family. Homodimer.

The protein localises to the cytoplasm. It carries out the reaction tRNA(Tyr) + L-tyrosine + ATP = L-tyrosyl-tRNA(Tyr) + AMP + diphosphate + H(+). The polypeptide is Probable tyrosine--tRNA ligase, cytoplasmic (Enterocytozoon bieneusi (strain H348) (Microsporidian parasite)).